Here is a 318-residue protein sequence, read N- to C-terminus: Ubiquitin-like domain-containing CTD phosphatase 1 (318 aa).

The Ubiquitin-like domain maps to 3-81 (LSLIIKWGGQ…IMMMGTREES (79 aa)). The FCP1 homology domain occupies 133-294 (PREGKKLLVL…VKLSQYLKEI (162 aa)). The Mg(2+) site is built by D143, D145, and D253.

Requires Mg(2+) as cofactor.

It localises to the nucleus. The enzyme catalyses O-phospho-L-seryl-[protein] + H2O = L-seryl-[protein] + phosphate. It carries out the reaction O-phospho-L-threonyl-[protein] + H2O = L-threonyl-[protein] + phosphate. Its function is as follows. Dephosphorylates 26S nuclear proteasomes, thereby decreasing their proteolytic activity. Recruited to the 19S regulatory particle of the 26S proteasome where it dephosphorylates 19S component psmc2 which impairs psmc2 ATPase activity and disrupts 26S proteasome assembly. Has also been reported to stimulate the proteolytic activity of the 26S proteasome. The sequence is that of Ubiquitin-like domain-containing CTD phosphatase 1 (ublcp1) from Xenopus laevis (African clawed frog).